Reading from the N-terminus, the 333-residue chain is uncharacterized protein (333 aa).

It belongs to the proline racemase family.

This is an uncharacterized protein from Vibrio parahaemolyticus serotype O3:K6 (strain RIMD 2210633).